A 100-amino-acid polypeptide reads, in one-letter code: Co-chaperonin GroES (100 aa).

The protein belongs to the GroES chaperonin family. Heptamer of 7 subunits arranged in a ring. Interacts with the chaperonin GroEL.

It localises to the cytoplasm. Together with the chaperonin GroEL, plays an essential role in assisting protein folding. The GroEL-GroES system forms a nano-cage that allows encapsulation of the non-native substrate proteins and provides a physical environment optimized to promote and accelerate protein folding. GroES binds to the apical surface of the GroEL ring, thereby capping the opening of the GroEL channel. The protein is Co-chaperonin GroES of Mycolicibacterium paratuberculosis (strain ATCC BAA-968 / K-10) (Mycobacterium paratuberculosis).